Reading from the N-terminus, the 526-residue chain is Phosphoenolpyruvate carboxykinase (ATP) 2 (526 aa).

3 residues coordinate substrate: R55, Y190, and K196. Residues K196, H215, and 231 to 239 (GLSGTGKTT) contribute to the ATP site. The Mn(2+) site is built by K196 and H215. Residue D252 coordinates Mn(2+). The ATP site is built by E280, R317, and T442. R317 lines the substrate pocket.

This sequence belongs to the phosphoenolpyruvate carboxykinase (ATP) family. It depends on Mn(2+) as a cofactor.

It localises to the cytoplasm. The catalysed reaction is oxaloacetate + ATP = phosphoenolpyruvate + ADP + CO2. It participates in carbohydrate biosynthesis; gluconeogenesis. Functionally, involved in the gluconeogenesis. Catalyzes the conversion of oxaloacetate (OAA) to phosphoenolpyruvate (PEP) through direct phosphoryl transfer between the nucleoside triphosphate and OAA. The chain is Phosphoenolpyruvate carboxykinase (ATP) 2 from Moorella thermoacetica (strain ATCC 39073 / JCM 9320).